Reading from the N-terminus, the 173-residue chain is Calcium-binding protein 5 (173 aa).

EF-hand domains follow at residues 28-63 (DEIE…MGYM), 82-99 (GRVD…KLLA), 105-140 (IGVQ…LLGD), and 142-173 (LTSQ…MMSR). Ca(2+)-binding residues include Asp-41, Asp-43, Asp-45, and Asp-52. The Ca(2+) site is built by Asp-118, Asn-120, Asp-122, Glu-124, Glu-129, Asp-155, Asn-157, Asp-159, Thr-161, and Glu-166.

Interacts with CACNA1C (via C-terminal CDB motif) in a calcium-dependent manner. Interacts with STXBP1. Interacts with MYO6. Expressed in the retina (at protein level).

Its subcellular location is the cytoplasm. Inhibits calcium-dependent inactivation of L-type calcium channel and shifts voltage dependence of activation to more depolarized membrane potentials. Involved in the transmission of light signals. May positively regulate neurotransmitter vesicle endocytosis and exocytosis in a salt-dependent manner. May play a role in the extension and network organization of neurites. The protein is Calcium-binding protein 5 (CABP5) of Bos taurus (Bovine).